A 134-amino-acid chain; its full sequence is UPF0102 protein Rmet_3430 (134 aa).

The protein belongs to the UPF0102 family.

The protein is UPF0102 protein Rmet_3430 of Cupriavidus metallidurans (strain ATCC 43123 / DSM 2839 / NBRC 102507 / CH34) (Ralstonia metallidurans).